A 230-amino-acid chain; its full sequence is Membrane protein (230 aa).

Residues 1-24 (MSSPTTPVPVISWTADEAIKFLKE) lie on the Virion surface side of the membrane. A helical transmembrane segment spans residues 25–45 (WNFSLGIIVLFITIILQFGYT). Over 46-55 (SRSMFVYVIK) the chain is Intravirion. The chain crosses the membrane as a helical span at residues 56 to 76 (MVILWLMWPLTIILTIFNCVY). At 77–84 (ALNNVYLG) the chain is on the virion surface side. The chain crosses the membrane as a helical span at residues 85-105 (FSIVFTIVAIIMWVVYFVNSI). Residues 106-228 (RLFIRTGSWW…SGMDTALLRN (123 aa)) are Intravirion-facing.

This sequence belongs to the betacoronaviruses M protein family. As to quaternary structure, homomultimer. Interacts with envelope E protein in the budding compartment of the host cell, which is located between endoplasmic reticulum and the Golgi complex. Forms a complex with HE and S proteins. Interacts with nucleocapsid N protein. This interaction probably participates in RNA packaging into the virus.

Its subcellular location is the virion membrane. The protein resides in the host Golgi apparatus membrane. Its function is as follows. Component of the viral envelope that plays a central role in virus morphogenesis and assembly via its interactions with other viral proteins. The protein is Membrane protein of Porcine hemagglutinating encephalomyelitis virus (strain 67N) (HEV-67N).